The following is a 1948-amino-acid chain: [F-actin]-monooxygenase MICAL2 (1948 aa).

The segment at 2-494 (GENEDEKQAQ…KHLYITKEMD (493 aa)) is monooxygenase domain. Residues C97, 116–118 (EKR), 123–125 (RNN), F183, Y298, and D398 contribute to the FAD site. The Calponin-homology (CH) domain maps to 516-619 (DIRPNKLLTW…MVMYLSKFYE (104 aa)). S631 carries the phosphoserine modification. The Nuclear localization signal signature appears at 660 to 681 (RKRTPRVDAQTEENDVNKRRRQ). Disordered regions lie at residues 664–709 (PRVD…ESGN), 753–776 (SRPP…PPLK), and 891–923 (KRVP…DSVS). A compositionally biased stretch (polar residues) spans 693-709 (SSRSLGSSQEYAKESGN). Residues 896–917 (AHPPSPPSCLPSPDPAAAPSPP) show a composition bias toward pro residues. The LIM zinc-binding domain maps to 980–1042 (DTCYFCKKRV…KLHFAHCKTS (63 aa)). 8 residues coordinate Zn(2+): C982, C985, H1003, C1006, C1009, C1012, C1032, and H1035. Disordered regions lie at residues 1045-1134 (QRKR…GQDG), 1146-1185 (SEDS…QPLT), and 1233-1298 (QSNS…DDVS). The segment covering 1050 to 1059 (AELNQQREEE) has biased composition (basic and acidic residues). Residues 1233–1243 (QSNSTPMNQRA) are compositionally biased toward polar residues. The segment covering 1254 to 1271 (SSSSSPSLPSSFSSASVP) has biased composition (low complexity). Residues 1277–1292 (DSSSPQVTYNLHSPQI) show a composition bias toward polar residues. An interaction with MAPK1 region spans residues 1300 to 1339 (TPIYLRRARAQGITKEIPLYLPHSPMLESTEHCLVSPDGE). Disordered regions lie at residues 1478-1505 (QKKA…KSPL), 1519-1622 (SSEA…SSKV), 1672-1726 (GDFF…QAGK), and 1739-1767 (SGPG…QLSS). Basic and acidic residues predominate over residues 1522 to 1534 (AGKKTSSKPETKT). Residues 1570 to 1579 (KASAFFSLAS) show a composition bias toward low complexity. The span at 1580–1591 (PTSKAAQASDLS) shows a compositional bias: polar residues. Residues 1672-1682 (GDFFNSPKEKG) are compositionally biased toward basic and acidic residues. S1677 is modified (phosphoserine). Composition is skewed to polar residues over residues 1698 to 1715 (VDST…TGQD) and 1747 to 1756 (EDTSSPTSSS). One can recognise a bMERB domain in the interval 1786–1936 (KQEELKRLHK…ERTQDQHFEN (151 aa)).

This sequence belongs to the Mical family. As to quaternary structure, interacts with PLXNA4. Interacts with RAB1B. Interacts with MAPK1/ERK2. Interacts with RAB35, RAB8A, RAB10, RAB13 and RAB15 (in their GTP-bound forms); binding to RAB35 is of low affinity compared to other Rab proteins; at least in case of RAB8A may bind 2 molecules of RAB8A simultaneously through a high and a low affinity binding site, respectively. May interact with MAPK1/ERK2. It depends on FAD as a cofactor.

It localises to the nucleus. The protein resides in the cytoplasm. The enzyme catalyses L-methionyl-[F-actin] + NADPH + O2 + H(+) = L-methionyl-(R)-S-oxide-[F-actin] + NADP(+) + H2O. Functionally, methionine monooxygenase that promotes depolymerization of F-actin by mediating oxidation of residues 'Met-44' and 'Met-47' on actin to form methionine-sulfoxide, resulting in actin filament disassembly and preventing repolymerization. Regulates the disassembly of branched actin networks also by oxidizing ARP3B-containing ARP2/3 complexes leading to ARP3B dissociation from the network. Acts as a key regulator of the SRF signaling pathway elicited by nerve growth factor and serum: mediates oxidation and subsequent depolymerization of nuclear actin, leading to increase MKL1/MRTF-A presence in the nucleus and promote SRF:MKL1/MRTF-A-dependent gene transcription. Does not activate SRF:MKL1/MRTF-A through RhoA. The chain is [F-actin]-monooxygenase MICAL2 from Rattus norvegicus (Rat).